An 803-amino-acid polypeptide reads, in one-letter code: Phenylalanine--tRNA ligase beta subunit (803 aa).

The region spanning threonine 39–alanine 152 is the tRNA-binding domain. Positions arginine 406–valine 480 constitute a B5 domain. Positions 458, 464, 467, and 468 each coordinate Mg(2+). Positions proline 709–arginine 802 constitute an FDX-ACB domain.

It belongs to the phenylalanyl-tRNA synthetase beta subunit family. Type 1 subfamily. Tetramer of two alpha and two beta subunits. Mg(2+) serves as cofactor.

It localises to the cytoplasm. It catalyses the reaction tRNA(Phe) + L-phenylalanine + ATP = L-phenylalanyl-tRNA(Phe) + AMP + diphosphate + H(+). This chain is Phenylalanine--tRNA ligase beta subunit, found in Moorella thermoacetica (strain ATCC 39073 / JCM 9320).